Here is a 152-residue protein sequence, read N- to C-terminus: MSNQEQTFIAVKPDGVQRGLVGNIISRFENRGFKLVAMKLTQPGQAHLEKHYEDLNTKPFFAGLIKYMNSGPICAMVWEGKDAVKTGRTILGATNPLASAPGTIRGDFALDMGRNVCHGSDSVENAKKEIALWFKPEELNQWNHHSAAWIFE.

Residues Lys-12, Phe-60, Arg-88, Thr-94, Arg-105, and Asn-115 each contribute to the ATP site. The active-site Pros-phosphohistidine intermediate is His-118.

The protein belongs to the NDK family. As to quaternary structure, homotrimer. It depends on Mg(2+) as a cofactor.

It carries out the reaction a 2'-deoxyribonucleoside 5'-diphosphate + ATP = a 2'-deoxyribonucleoside 5'-triphosphate + ADP. It catalyses the reaction a ribonucleoside 5'-diphosphate + ATP = a ribonucleoside 5'-triphosphate + ADP. Functionally, major role in the synthesis of nucleoside triphosphates other than ATP. The ATP gamma phosphate is transferred to the NDP beta phosphate via a ping-pong mechanism, using a phosphorylated active-site intermediate. The sequence is that of Nucleoside diphosphate kinase (ndk-1) from Neurospora crassa (strain ATCC 24698 / 74-OR23-1A / CBS 708.71 / DSM 1257 / FGSC 987).